The sequence spans 198 residues: Na(+)-translocating NADH-quinone reductase subunit E (198 aa).

Helical transmembrane passes span 11 to 31, 39 to 59, 77 to 97, 110 to 130, 140 to 160, and 176 to 196; these read SIFI…FLAV, FGLG…NNLV, FLSF…LEMI, GIFL…SFMV, VVYG…LAGI, and LGIT…FSGV.

Belongs to the NqrDE/RnfAE family. Composed of six subunits; NqrA, NqrB, NqrC, NqrD, NqrE and NqrF.

The protein localises to the cell inner membrane. It catalyses the reaction a ubiquinone + n Na(+)(in) + NADH + H(+) = a ubiquinol + n Na(+)(out) + NAD(+). Its function is as follows. NQR complex catalyzes the reduction of ubiquinone-1 to ubiquinol by two successive reactions, coupled with the transport of Na(+) ions from the cytoplasm to the periplasm. NqrA to NqrE are probably involved in the second step, the conversion of ubisemiquinone to ubiquinol. This chain is Na(+)-translocating NADH-quinone reductase subunit E, found in Aliivibrio fischeri (strain ATCC 700601 / ES114) (Vibrio fischeri).